The sequence spans 115 residues: Salivary anti-complement protein (115 aa).

The signal sequence occupies residues 1–22 (MKFFYLIFSAIFFLADPALVKC). 3 cysteine pairs are disulfide-bonded: cysteine 26–cysteine 108, cysteine 41–cysteine 92, and cysteine 83–cysteine 101.

In terms of assembly, may form multimers. Salivary gland (at protein level).

Its subcellular location is the secreted. Its function is as follows. Salivary protein that inhibits the classical pathway of complement system activation in the host while having no inhibitory effect on the alternative or lectin pathways. Prevent cleavage of host C4 and consequently impairs the activation of factors downstream of C4b in the complement cascade. The polypeptide is Salivary anti-complement protein (Lutzomyia longipalpis (Sand fly)).